The sequence spans 308 residues: Ribosomal protein uL3 glutamine methyltransferase (308 aa).

The protein belongs to the protein N5-glutamine methyltransferase family. PrmB subfamily.

It carries out the reaction L-glutaminyl-[ribosomal protein uL3] + S-adenosyl-L-methionine = N(5)-methyl-L-glutaminyl-[ribosomal protein uL3] + S-adenosyl-L-homocysteine + H(+). In terms of biological role, methylates large ribosomal subunit protein uL3 on a specific glutamine residue. This chain is Ribosomal protein uL3 glutamine methyltransferase, found in Xanthomonas campestris pv. campestris (strain ATCC 33913 / DSM 3586 / NCPPB 528 / LMG 568 / P 25).